Reading from the N-terminus, the 415-residue chain is Branched-chain-amino-acid aminotransferase, cytosolic (415 aa).

The residue at position 244 (K244) is an N6-(pyridoxal phosphate)lysine.

It belongs to the class-IV pyridoxal-phosphate-dependent aminotransferase family. Pyridoxal 5'-phosphate is required as a cofactor.

The protein resides in the cytoplasm. It carries out the reaction L-leucine + 2-oxoglutarate = 4-methyl-2-oxopentanoate + L-glutamate. It catalyses the reaction L-isoleucine + 2-oxoglutarate = (S)-3-methyl-2-oxopentanoate + L-glutamate. The catalysed reaction is L-valine + 2-oxoglutarate = 3-methyl-2-oxobutanoate + L-glutamate. Its function is as follows. Catalyzes the first reaction in the catabolism of the essential branched chain amino acids leucine, isoleucine, and valine. The polypeptide is Branched-chain-amino-acid aminotransferase, cytosolic (bcat-1) (Caenorhabditis elegans).